We begin with the raw amino-acid sequence, 512 residues long: Cytochrome P450 1A2 (512 aa).

O-linked (GlcNAc) serine glycosylation is present at S65. F222 is a binding site for substrate. C454 lines the heme pocket.

This sequence belongs to the cytochrome P450 family. As to quaternary structure, interacts with PGRMC1; the interaction requires PGRMC1 homodimerization. The cofactor is heme. In terms of tissue distribution, constitutively expressed in liver.

The protein localises to the endoplasmic reticulum membrane. Its subcellular location is the microsome membrane. The catalysed reaction is an organic molecule + reduced [NADPH--hemoprotein reductase] + O2 = an alcohol + oxidized [NADPH--hemoprotein reductase] + H2O + H(+). It catalyses the reaction 17beta-estradiol + reduced [NADPH--hemoprotein reductase] + O2 = 2-hydroxy-17beta-estradiol + oxidized [NADPH--hemoprotein reductase] + H2O + H(+). It carries out the reaction 17beta-estradiol + reduced [NADPH--hemoprotein reductase] + O2 = 4-hydroxy-17beta-estradiol + oxidized [NADPH--hemoprotein reductase] + H2O + H(+). The enzyme catalyses estrone + reduced [NADPH--hemoprotein reductase] + O2 = 2-hydroxyestrone + oxidized [NADPH--hemoprotein reductase] + H2O + H(+). The catalysed reaction is estrone + reduced [NADPH--hemoprotein reductase] + O2 = 4-hydroxyestrone + oxidized [NADPH--hemoprotein reductase] + H2O + H(+). It catalyses the reaction cholesterol + reduced [NADPH--hemoprotein reductase] + O2 = 25-hydroxycholesterol + oxidized [NADPH--hemoprotein reductase] + H2O + H(+). It carries out the reaction all-trans-retinol + reduced [NADPH--hemoprotein reductase] + O2 = all-trans-retinal + oxidized [NADPH--hemoprotein reductase] + 2 H2O + H(+). The enzyme catalyses all-trans-retinal + reduced [NADPH--hemoprotein reductase] + O2 = all-trans-retinoate + oxidized [NADPH--hemoprotein reductase] + H2O + 2 H(+). The catalysed reaction is (5Z,8Z,11Z,14Z)-eicosatetraenoate + reduced [NADPH--hemoprotein reductase] + O2 = (14R,15S)-epoxy-(5Z,8Z,11Z)-eicosatrienoate + oxidized [NADPH--hemoprotein reductase] + H2O + H(+). It catalyses the reaction (5Z,8Z,11Z,14Z)-eicosatetraenoate + reduced [NADPH--hemoprotein reductase] + O2 = (14S,15R)-epoxy-(5Z,8Z,11Z)-eicosatrienoate + oxidized [NADPH--hemoprotein reductase] + H2O + H(+). It carries out the reaction (5Z,8Z,11Z,14Z,17Z)-eicosapentaenoate + reduced [NADPH--hemoprotein reductase] + O2 = (17R,18S)-epoxy-(5Z,8Z,11Z,14Z)-eicosatetraenoate + oxidized [NADPH--hemoprotein reductase] + H2O + H(+). The enzyme catalyses (4Z,7Z,10Z,13Z,16Z,19Z)-docosahexaenoate + reduced [NADPH--hemoprotein reductase] + O2 = (19R,20S)-epoxy-(4Z,7Z,10Z,13Z,16Z)-docosapentaenoate + oxidized [NADPH--hemoprotein reductase] + H2O + H(+). The catalysed reaction is (5S)-hydroperoxy-(6E,8Z,11Z,14Z)-eicosatetraenoate = 5-oxo-(6E,8Z,11Z,14Z)-eicosatetraenoate + H2O. It catalyses the reaction (12S)-hydroperoxy-(5Z,8Z,10E,14Z)-eicosatetraenoate = 12-oxo-(5Z,8Z,10E,14Z)-eicosatetraenoate + H2O. It carries out the reaction (15S)-hydroperoxy-(5Z,8Z,11Z,13E)-eicosatetraenoate = 15-oxo-(5Z,8Z,11Z,13E)-eicosatetraenoate + H2O. The enzyme catalyses (13S)-hydroperoxy-(9Z,11E)-octadecadienoate = 13-oxo-(9Z,11E)-octadecadienoate + H2O. The catalysed reaction is (5Z,8Z,11Z,14Z)-eicosatetraenoate + reduced [NADPH--hemoprotein reductase] + O2 = 13-hydroxy-(5Z,8Z,11Z,14Z)-eicosatetraenoate + oxidized [NADPH--hemoprotein reductase] + H2O + H(+). It catalyses the reaction (5Z,8Z,11Z,14Z)-eicosatetraenoate + reduced [NADPH--hemoprotein reductase] + O2 = 19-hydroxy-(5Z,8Z,11Z,14Z)-eicosatetraenoate + oxidized [NADPH--hemoprotein reductase] + H2O + H(+). It carries out the reaction (9Z,12Z)-octadecadienoate + reduced [NADPH--hemoprotein reductase] + O2 = 11-hydroxy-(9Z,12Z)-octadecadienoate + oxidized [NADPH--hemoprotein reductase] + H2O + H(+). Its pathway is cofactor metabolism; retinol metabolism. The protein operates within steroid metabolism; cholesterol metabolism. It participates in lipid metabolism; arachidonate metabolism. Functionally, a cytochrome P450 monooxygenase involved in the metabolism of various endogenous substrates, including fatty acids, steroid hormones and vitamins. Mechanistically, uses molecular oxygen inserting one oxygen atom into a substrate, and reducing the second into a water molecule, with two electrons provided by NADPH via cytochrome P450 reductase (NADPH--hemoprotein reductase). Catalyzes the hydroxylation of carbon-hydrogen bonds. Exhibits high catalytic activity for the formation of hydroxyestrogens from estrone (E1) and 17beta-estradiol (E2), namely 2-hydroxy E1 and E2. Metabolizes cholesterol toward 25-hydroxycholesterol, a physiological regulator of cellular cholesterol homeostasis. May act as a major enzyme for all-trans retinoic acid biosynthesis in the liver. Catalyzes two successive oxidative transformation of all-trans retinol to all-trans retinal and then to the active form all-trans retinoic acid. Primarily catalyzes stereoselective epoxidation of the last double bond of polyunsaturated fatty acids (PUFA), displaying a strong preference for the (R,S) stereoisomer. Catalyzes bisallylic hydroxylation and omega-1 hydroxylation of PUFA. May also participate in eicosanoids metabolism by converting hydroperoxide species into oxo metabolites (lipoxygenase-like reaction, NADPH-independent). Plays a role in the oxidative metabolism of xenobiotics. Catalyzes the N-hydroxylation of heterocyclic amines and the O-deethylation of phenacetin. Metabolizes caffeine via N3-demethylation. This chain is Cytochrome P450 1A2 (CYP1A2), found in Canis lupus familiaris (Dog).